The primary structure comprises 422 residues: Probable metallocarboxypeptidase A (422 aa).

A signal peptide spans 1–17 (MRSVLSLALLAVNVVTA). The propeptide at 18 to 112 (AVVAPFDYSG…FEAYSAGYAP (95 aa)) is activation peptide. The 301-residue stretch at 119 to 419 (SYHSYQDHLS…AGTVAMLKAV (301 aa)) folds into the Peptidase M14 domain. H179 and E182 together coordinate Zn(2+). Substrate-binding positions include 179–182 (HARE), R237, and 254–255 (NR). C248 and C271 form a disulfide bridge. Residue H309 participates in Zn(2+) binding. Position 310 to 311 (310 to 311 (SY)) interacts with substrate. E385 functions as the Proton donor/acceptor in the catalytic mechanism.

This sequence belongs to the peptidase M14 family. Zn(2+) serves as cofactor.

It is found in the secreted. Extracellular metalloprotease that contributes to pathogenicity. The sequence is that of Probable metallocarboxypeptidase A (MCPA) from Trichophyton verrucosum (strain HKI 0517).